Consider the following 769-residue polypeptide: MLCRCSPLLLLVGLLTLRSALSQECAKYKVSTCRDCIESGPGCAWCQKLNFSGQGEPDSVRCDTREQLLAKGCVADDIVDPRSLAETQEDQAGGQKQLSPQKVTLYLRPGQAATFNVTFRRAKGYPIDLYYLMDLSYSMLDDLINVKKLGGDLLRALNEITESGRIGFGSFVDKTVLPFVNTHPEKLRNPCPNKEKECQAPFAFRHVLKLTDNSNQFQTEVGKQLISGNLDAPEGGLDAMMQVAACPEEIGWRNVTRLLVFATDDGFHFAGDGKLGAILTPNDGRCHLEDNLYKSSNEFDYPSVGQLAHKLAESNIQPIFAVTKKMVKTYEKLTDIIPKSAVGELSEDSSNVLELIKNAYNKLSSRVFLDHNALPDTLKVTYDSFCSNGVSQVNQPRGDCDGVQINVPITFQVKVTASECIQEQSFVIRALGFTDTVTVRVLPQCECRCGDSSKERTLCGNKGSMECGVCRCDAGYIGKHCECQTQGRSSQELEGSCRKDNSSIICSGLGDCICGQCVCHTSDVPNKKIYGQFCECDNMNCERFDGQVCGGEKRGLCFCSTCRCQEGFEGSACQCLKSTQGCLNLQGVECSGRGRCRCNVCQCDFGYQPPLCTDCPSCQVPCARYAKCAECLKFDTGPFAKNCSAECGTTKLLPSRMSGRKCNERDSEGCWMTYFLVQRDGRDNYDLHVEETRECVKGPNIAAIVGGTVGGVVLVGIFLLVIWKVLTHLSDLREYKRFEKEKLKSQWNNDNPLFKSATTTVMNPKFAER.

The signal sequence occupies residues 1–22; it reads MLCRCSPLLLLVGLLTLRSALS. Gln23 carries the post-translational modification Pyrrolidone carboxylic acid. The Extracellular segment spans residues 23–700; sequence QECAKYKVST…ETRECVKGPN (678 aa). The 51-residue stretch at 24–74 folds into the PSI domain; it reads ECAKYKVSTCRDCIESGPGCAWCQKLNFSGQGEPDSVRCDTREQLLAKGCV. 28 cysteine pairs are disulfide-bonded: Cys25-Cys43, Cys33-Cys447, Cys36-Cys62, Cys46-Cys73, Cys191-Cys198, Cys246-Cys286, Cys386-Cys400, Cys420-Cys445, Cys449-Cys467, Cys459-Cys470, Cys472-Cys481, Cys483-Cys514, Cys497-Cys512, Cys506-Cys517, Cys519-Cys534, Cys536-Cys559, Cys541-Cys557, Cys549-Cys562, Cys564-Cys573, Cys575-Cys598, Cys582-Cys596, Cys590-Cys601, Cys603-Cys612, Cys615-Cys618, Cys622-Cys662, Cys628-Cys647, Cys631-Cys643, and Cys670-Cys695. Residues Asn50 and Asn116 are each glycosylated (N-linked (GlcNAc...) asparagine). The region spanning 124–363 is the VWFA domain; the sequence is GYPIDLYYLM…ELIKNAYNKL (240 aa). Mg(2+) is bound by residues Ser136 and Ser138. The Ca(2+) site is built by Ser138, Asp141, Asp142, and Asp173. The Ca(2+) site is built by Asn229, Asp231, Pro233, and Glu234. Glu234 serves as a coordination point for Mg(2+). Asn254 carries an N-linked (GlcNAc...) asparagine glycan. Ca(2+)-binding residues include Asp264 and Glu347. A Cell attachment site motif is present at residues 397 to 399; sequence RGD. I-EGF domains lie at 449–482, 483–535, 536–574, and 575–613; these read CGDSSKERTLCGNKGSMECGVCRCDAGYIGKHCE, CQTQ…QFCE, CDNMNCERFDGQVCGGEKRGLCFCSTCRCQEGFEGSACQ, and CLKSTQGCLNLQGVECSGRGRCRCNVCQCDFGYQPPLCT. A glycan (N-linked (GlcNAc...) asparagine) is linked at Asn501. The N-linked (GlcNAc...) asparagine glycan is linked to Asn642. The chain crosses the membrane as a helical span at residues 701-723; the sequence is IAAIVGGTVGGVVLVGIFLLVIW. Residues 724 to 769 are Cytoplasmic-facing; sequence KVLTHLSDLREYKRFEKEKLKSQWNNDNPLFKSATTTVMNPKFAER. Ser745 and Ser756 each carry phosphoserine. Residues Thr758 and Thr760 each carry the phosphothreonine modification.

It belongs to the integrin beta chain family. Heterodimer of an alpha and a beta subunit. The ITGB2 beta subunit associates with the ITGAL, ITGAM, ITGAX or ITGAD alpha subunits. Found in a complex with CD177 and ITGAM/CD11b. Interacts with FGR. Interacts with COPS5 and RANBP9. Interacts with FLNA (via filamin repeats 4, 9, 12, 17, 19, 21, and 23). Interacts with THBD. Post-translationally, both Ser-745 and Ser-756 become phosphorylated when T-cells are exposed to phorbol esters. Phosphorylation on Thr-758 (but not on Ser-756) allows interaction with 14-3-3 proteins.

It is found in the cell membrane. The protein localises to the membrane raft. Integrin ITGAL/ITGB2 is a receptor for ICAM1, ICAM2, ICAM3 and ICAM4. Integrin ITGAL/ITGB2 is also a receptor for the secreted form of ubiquitin-like protein ISG15; the interaction is mediated by ITGAL. Integrins ITGAM/ITGB2 and ITGAX/ITGB2 are receptors for the iC3b fragment of the third complement component and for fibrinogen. Integrin ITGAX/ITGB2 recognizes the sequence G-P-R in fibrinogen alpha-chain. Integrin ITGAM/ITGB2 recognizes P1 and P2 peptides of fibrinogen gamma chain. Integrin ITGAM/ITGB2 is also a receptor for factor X. Integrin ITGAD/ITGB2 is a receptor for ICAM3 and VCAM1. Contributes to natural killer cell cytotoxicity. Involved in leukocyte adhesion and transmigration of leukocytes including T-cells and neutrophils. Triggers neutrophil transmigration during lung injury through PTK2B/PYK2-mediated activation. Integrin alpha-L/beta-2 in association with ICAM3, contributes to apoptotic neutrophil phagocytosis by macrophages. This chain is Integrin beta-2 (ITGB2), found in Sus scrofa (Pig).